The following is a 192-amino-acid chain: Xanthine phosphoribosyltransferase (192 aa).

2 residues coordinate xanthine: leucine 20 and asparagine 27. Alanine 128 to alanine 132 provides a ligand contact to 5-phospho-alpha-D-ribose 1-diphosphate. Lysine 156 serves as a coordination point for xanthine.

The protein belongs to the purine/pyrimidine phosphoribosyltransferase family. Xpt subfamily. In terms of assembly, homodimer.

It localises to the cytoplasm. It catalyses the reaction XMP + diphosphate = xanthine + 5-phospho-alpha-D-ribose 1-diphosphate. It functions in the pathway purine metabolism; XMP biosynthesis via salvage pathway; XMP from xanthine: step 1/1. Functionally, converts the preformed base xanthine, a product of nucleic acid breakdown, to xanthosine 5'-monophosphate (XMP), so it can be reused for RNA or DNA synthesis. The polypeptide is Xanthine phosphoribosyltransferase (Staphylococcus aureus (strain bovine RF122 / ET3-1)).